Consider the following 486-residue polypeptide: MGPLSPARTLRLWGPRSLGVALGVFMTIGFALQLLGGPFQRRLPGLQLRQPSAPSLRPALPSCPPRQRLVFLKTHKSGSSSVLSLLHRYGDQHGLRFALPARYQFGYPKLFQASRVKGYRPQGGGTQLPFHILCHHMRFNLKEVLQVMPSDSFFFSIVRDPAALARSAFSYYKSTSSAFRKSPSLAAFLANPRGFYRPGARGDHYARNLLWFDFGLPFPPEKRAKRGNIHPPRDPNPPQLQVLPSGAGPRAQTLNPNALIHPVSTVTDHRSQISSPASFDLGSSSFIQWGLAWLDSVFDLVMVAEYFDESLVLLADALCWGLDDVVGFMHNAQAGHKQGLSTVSNSGLTAEDRQLTARARAWNNLDWALYVHFNRSLWARIEKYGQGRLQTAVAELRARREALAKHCLVGGEASDPKYITDRRFRPFQFGSAKVLGYILRSGLSPQDQEECERLATPELQYKDKLDAKQFPPTVSLPLKTSRPLSP.

At 1-18 the chain is on the cytoplasmic side; it reads MGPLSPARTLRLWGPRSL. A helical; Signal-anchor for type II membrane protein membrane pass occupies residues 19–39; that stretch reads GVALGVFMTIGFALQLLGGPF. The Lumenal segment spans residues 40–486; the sequence is QRRLPGLQLR…PLKTSRPLSP (447 aa). N-linked (GlcNAc...) asparagine glycosylation occurs at N374.

It belongs to the galactose-3-O-sulfotransferase family. Mn(2+) serves as cofactor. As to expression, expressed mainly in placenta, thymus, testis, ovary, spinal cord, trachea and adrenal gland and at low levels in brain, lung, spleen, prostate, small intestine, colon, stomach thyroid and lymph node.

Its subcellular location is the golgi apparatus. The protein resides in the golgi stack membrane. It participates in protein modification; carbohydrate sulfation. In terms of biological role, catalyzes the transfer of sulfate to beta-1,3-linked galactose residues in O-linked glycoproteins. Good substrates include asialofetuin, Gal-beta-1,3-GalNAc and Gal-beta-1,3 (GlcNAc-beta-1,6)GalNAc. In Homo sapiens (Human), this protein is Galactose-3-O-sulfotransferase 4 (GAL3ST4).